Reading from the N-terminus, the 77-residue chain is Blood-induced peptide 1 (77 aa).

Residues 38-71 (EDFLHQENSELKKSLKNLEMENEKLKNILKTDYN) adopt a coiled-coil conformation.

In terms of biological role, plays an important role in survival in host blood through increasing tolerance to stresses such as heat, salt, or cycloheximide, which is essential for virulence. The polypeptide is Blood-induced peptide 1 (Candida albicans (strain SC5314 / ATCC MYA-2876) (Yeast)).